A 305-amino-acid polypeptide reads, in one-letter code: Putative HTH-type transcriptional regulatory protein Saci_1344 (305 aa).

The HTH cro/C1-type domain maps to 128-183; the sequence is LREKREEKNMSLGELSQRLGVSRISVYDYEKEDSYVSIEVAEKLIEIFGDEVIGDI. Residues 139-158 constitute a DNA-binding region (H-T-H motif); the sequence is LGELSQRLGVSRISVYDYEK.

In Sulfolobus acidocaldarius (strain ATCC 33909 / DSM 639 / JCM 8929 / NBRC 15157 / NCIMB 11770), this protein is Putative HTH-type transcriptional regulatory protein Saci_1344.